The chain runs to 379 residues: PqqA peptide cyclase (379 aa).

The region spanning 8-220 (LPAPIGLLAE…IRVVEEARER (213 aa)) is the Radical SAM core domain. Positions 22, 26, and 29 each coordinate [4Fe-4S] cluster.

The protein belongs to the radical SAM superfamily. PqqE family. Interacts with PqqD. The interaction is necessary for activity of PqqE. Requires [4Fe-4S] cluster as cofactor.

The catalysed reaction is [PQQ precursor protein] + S-adenosyl-L-methionine = E-Y cross-linked-[PQQ precursor protein] + 5'-deoxyadenosine + L-methionine + H(+). It participates in cofactor biosynthesis; pyrroloquinoline quinone biosynthesis. Its function is as follows. Catalyzes the cross-linking of a glutamate residue and a tyrosine residue in the PqqA protein as part of the biosynthesis of pyrroloquinoline quinone (PQQ). In Methylobacterium nodulans (strain LMG 21967 / CNCM I-2342 / ORS 2060), this protein is PqqA peptide cyclase.